Reading from the N-terminus, the 747-residue chain is ESX-1 secretion system protein EccCa1 (747 aa).

The next 3 helical transmembrane spans lie at 41–61 (ILPYVMGGAMLGMIAIMVAGG), 65–85 (LSPYMLMMPLMMIVMMVGGLA), and 222–242 (FPTIAIGGDLAGAAGLMTAMI). A FtsK domain is found at 456–665 (GNVMYLDIKE…LRTTSSHESK (210 aa)). Residue 479–486 (GTTGSGKS) participates in ATP binding.

In terms of assembly, part of the ESX-1 / type VII secretion system (T7SS), which is composed of cytosolic and membrane components. The ESX-1 membrane complex is composed of EccB1, EccCa1, EccCb1, EccD1 and EccE1.

The protein resides in the cell inner membrane. Part of the ESX-1 specialized secretion system, which delivers several virulence factors to host cells during infection, including the key virulence factors EsxA (ESAT-6) and EsxB (CFP-10). This is ESX-1 secretion system protein EccCa1 from Mycobacterium tuberculosis (strain CDC 1551 / Oshkosh).